Consider the following 612-residue polypeptide: Oligopeptide transport ATP-binding protein OppD (612 aa).

An ABC transporter 1 domain is found at 5-255 (LEVTDLAVTF…RRMPYTVGLL (251 aa)). Positions 43, 44, 45, 46, 47, 48, 49, 61, 96, 147, 158, 159, and 213 each coordinate ATP. The [4Fe-4S] cluster site is built by Cys286, Cys292, Cys299, and Cys317. An ABC transporter 2 domain is found at 350–600 (VRVRHLVKTY…PKHEYTRRLL (251 aa)). The ATP site is built by Ser396, Gly397, Ser398, Gly399, Lys400, Ser401, Thr402, Gln445, Arg495, Glu499, Gly503, and His558.

This sequence belongs to the ABC transporter superfamily. The complex is composed of an ATP-binding protein (OppD), two transmembrane proteins (OppB and OppC) and a solute-binding protein (OppA).

The protein localises to the cell inner membrane. It catalyses the reaction a [peptide](out) + ATP + H2O = a [peptide](in) + ADP + phosphate + H(+). Functionally, part of the ABC transporter complex OppABCD involved in the uptake of oligopeptides. Responsible for energy coupling to the transport system. In Mycobacterium bovis (strain ATCC BAA-935 / AF2122/97), this protein is Oligopeptide transport ATP-binding protein OppD.